Here is a 361-residue protein sequence, read N- to C-terminus: Porphobilinogen deaminase (361 aa).

Cys265 carries the post-translational modification S-(dipyrrolylmethanemethyl)cysteine. The disordered stretch occupies residues 341 to 361 (LPPSSNTPTPQPITPITTNNS).

It belongs to the HMBS family. Dipyrromethane is required as a cofactor.

The catalysed reaction is 4 porphobilinogen + H2O = hydroxymethylbilane + 4 NH4(+). It functions in the pathway porphyrin-containing compound metabolism; protoporphyrin-IX biosynthesis; coproporphyrinogen-III from 5-aminolevulinate: step 2/4. Functionally, tetrapolymerization of the monopyrrole PBG into the hydroxymethylbilane pre-uroporphyrinogen in several discrete steps. In Debaryomyces hansenii (strain ATCC 36239 / CBS 767 / BCRC 21394 / JCM 1990 / NBRC 0083 / IGC 2968) (Yeast), this protein is Porphobilinogen deaminase (HEM3).